A 255-amino-acid chain; its full sequence is Sugar fermentation stimulation protein homolog (255 aa).

The protein belongs to the SfsA family.

This is Sugar fermentation stimulation protein homolog from Synechococcus sp. (strain WH7803).